The following is a 274-amino-acid chain: Caldesmon, smooth muscle (274 aa).

Disordered regions lie at residues 1–102 (SNLK…FSPK) and 179–274 (KGNV…EKEP). Basic and acidic residues-rich tracts occupy residues 12–21 (GSEKLKEKQQ) and 28–95 (DELK…EKKP). Positions 182–194 (VFSSPGGTGTPNK) are enriched in polar residues. 2 stretches are compositionally biased toward basic and acidic residues: residues 226-245 (SDLR…KQSV) and 260-274 (KKSE…EKEP).

It localises to the cytoplasm. Its subcellular location is the cytoskeleton. The protein localises to the myofibril. The protein resides in the stress fiber. Control of actomyosin interactions in smooth muscle and nonmuscle cells (could act as a bridge between myosin and actin filaments). Inhibits the actin-activated ATPase of myosin this inhibition is attenuated by calcium-calmodulin and is potentiated by tropomyosin. Interacts with actin, myosin, 2 molecules of tropomyosin and with calmodulin. This is Caldesmon, smooth muscle (CALD1) from Meleagris gallopavo (Wild turkey).